A 389-amino-acid polypeptide reads, in one-letter code: MNDVIRDFFKMESAGGILLVIAAAIAMVIANSPLNESYQAVLHTYVFGMSVSHWINDGLMAIFFLLIGLEVKRELLEGALKSRETAIFPAIAAVGGMLAPALIYVAFNGNDPEAIKGWAIPAATDIAFALGIMALLGKRVPVSLKVFLLALAIIDDLGVVVIIALFYSGDLSTLALTVGFAMTGVLFMLNAKNVTKLIWYIVVGFILWVAVLKSGVHATLAGVVIGFSIPLQGKKGEHSPLKHMEHALHPYVAFAILPVFAFANAGISLEGVSLSGLTSMLPLGIALGLLVGKPLGIFTFSWAAVKFGVAKLPEGVNFKHIFAVSVLCGIGFTMSIFISSLAFGGANPDFDTYSRLGILMGSTTAAVLGYFLLHVSLPKTAAESEKAIS.

The next 11 helical transmembrane spans lie at 14-34 (AGGI…NSPL), 47-67 (FGMS…FLLI), 87-107 (IFPA…YVAF), 117-137 (GWAI…ALLG), 146-166 (VFLL…IALF), 171-191 (LSTL…MLNA), 197-217 (LIWY…SGVH), 252-272 (VAFA…LEGV), 280-300 (MLPL…IFTF), 321-341 (IFAV…ISSL), and 356-376 (LGIL…LHVS).

The protein belongs to the NhaA Na(+)/H(+) (TC 2.A.33) antiporter family.

It is found in the cell inner membrane. The catalysed reaction is Na(+)(in) + 2 H(+)(out) = Na(+)(out) + 2 H(+)(in). In terms of biological role, na(+)/H(+) antiporter that extrudes sodium in exchange for external protons. The protein is Na(+)/H(+) antiporter NhaA 1 of Vibrio vulnificus (strain CMCP6).